The chain runs to 965 residues: UvrABC system protein A (965 aa).

32–39 lines the ATP pocket; sequence GLSGSGKS. The segment at 254–281 adopts a C4-type zinc-finger fold; the sequence is CPVCDYSLPELEPRLFSFNAPMGACPAC. 2 ABC transporter domains span residues 311–588 and 608–937; these read WDRR…PRSL and PNAT…HFLA. 641-648 contacts ATP; that stretch reads GVSGSGKS. The C4-type zinc-finger motif lies at 740 to 766; that stretch reads CEACEGDGLIKVEMHFLPDVYVPCDIC.

The protein belongs to the ABC transporter superfamily. UvrA family. As to quaternary structure, forms a heterotetramer with UvrB during the search for lesions.

The protein resides in the cytoplasm. The UvrABC repair system catalyzes the recognition and processing of DNA lesions. UvrA is an ATPase and a DNA-binding protein. A damage recognition complex composed of 2 UvrA and 2 UvrB subunits scans DNA for abnormalities. When the presence of a lesion has been verified by UvrB, the UvrA molecules dissociate. The protein is UvrABC system protein A of Xylella fastidiosa (strain Temecula1 / ATCC 700964).